A 115-amino-acid polypeptide reads, in one-letter code: U3-lycotoxin-Ls1k (115 aa).

Positions 1–20 (MKFELLFGVLLVTLFSYSSA) are cleaved as a signal peptide. Positions 21–44 (EMLDDFDQADEDELLSLIEKEEAR) are excised as a propeptide. Intrachain disulfides connect Cys48–Cys63, Cys55–Cys72, Cys62–Cys87, and Cys74–Cys85.

The protein belongs to the neurotoxin 19 (CSTX) family. 01 subfamily. In terms of tissue distribution, expressed by the venom gland.

The protein resides in the secreted. In Lycosa singoriensis (Wolf spider), this protein is U3-lycotoxin-Ls1k.